Consider the following 142-residue polypeptide: Large ribosomal subunit protein uL16 (142 aa).

It belongs to the universal ribosomal protein uL16 family. As to quaternary structure, part of the 50S ribosomal subunit.

In terms of biological role, binds 23S rRNA and is also seen to make contacts with the A and possibly P site tRNAs. The chain is Large ribosomal subunit protein uL16 from Mycoplasmopsis pulmonis (strain UAB CTIP) (Mycoplasma pulmonis).